Reading from the N-terminus, the 161-residue chain is Cyclic pyranopterin monophosphate synthase (161 aa).

Residues 75-77 and 115-116 each bind substrate; these read MCH and ME. Asp-130 is an active-site residue.

The protein belongs to the MoaC family. Homohexamer; trimer of dimers.

The enzyme catalyses (8S)-3',8-cyclo-7,8-dihydroguanosine 5'-triphosphate = cyclic pyranopterin phosphate + diphosphate. It functions in the pathway cofactor biosynthesis; molybdopterin biosynthesis. In terms of biological role, catalyzes the conversion of (8S)-3',8-cyclo-7,8-dihydroguanosine 5'-triphosphate to cyclic pyranopterin monophosphate (cPMP). This Bacillus thuringiensis subsp. konkukian (strain 97-27) protein is Cyclic pyranopterin monophosphate synthase.